The chain runs to 287 residues: Protease HtpX (287 aa).

Transmembrane regions (helical) follow at residues 4 to 24 (IFLL…VMSI) and 33 to 53 (GGLL…SLAI). Residue histidine 139 coordinates Zn(2+). Residue glutamate 140 is part of the active site. Histidine 143 contacts Zn(2+). 2 consecutive transmembrane segments (helical) span residues 154-174 (LIQG…AGII) and 195-215 (AVVF…VAYF). Glutamate 220 contributes to the Zn(2+) binding site.

It belongs to the peptidase M48B family. The cofactor is Zn(2+).

The protein localises to the cell inner membrane. The protein is Protease HtpX of Shewanella putrefaciens (strain CN-32 / ATCC BAA-453).